The following is a 654-amino-acid chain: Acetyl-coenzyme A synthetase (654 aa).

CoA-binding positions include 196-199 and threonine 316; that span reads RGGK. ATP-binding positions include 392–394, 416–421, aspartate 506, and arginine 521; these read GEP and DTWWQT. Serine 529 serves as a coordination point for CoA. Arginine 532 provides a ligand contact to ATP. Mg(2+)-binding residues include valine 543 and valine 548. Lysine 618 is modified (N6-acetyllysine).

The protein belongs to the ATP-dependent AMP-binding enzyme family. It depends on Mg(2+) as a cofactor. Post-translationally, acetylated. Deacetylation by the SIR2-homolog deacetylase activates the enzyme.

It carries out the reaction acetate + ATP + CoA = acetyl-CoA + AMP + diphosphate. Functionally, catalyzes the conversion of acetate into acetyl-CoA (AcCoA), an essential intermediate at the junction of anabolic and catabolic pathways. AcsA undergoes a two-step reaction. In the first half reaction, AcsA combines acetate with ATP to form acetyl-adenylate (AcAMP) intermediate. In the second half reaction, it can then transfer the acetyl group from AcAMP to the sulfhydryl group of CoA, forming the product AcCoA. The chain is Acetyl-coenzyme A synthetase from Methylobacillus flagellatus (strain ATCC 51484 / DSM 6875 / VKM B-1610 / KT).